The chain runs to 311 residues: Pyrimidine-specific ribonucleoside hydrolase RihA (311 aa).

Residue His240 is part of the active site.

This sequence belongs to the IUNH family. RihA subfamily.

Its function is as follows. Hydrolyzes cytidine or uridine to ribose and cytosine or uracil, respectively. The protein is Pyrimidine-specific ribonucleoside hydrolase RihA of Salmonella paratyphi B (strain ATCC BAA-1250 / SPB7).